Here is a 202-residue protein sequence, read N- to C-terminus: Putative 3-methyladenine DNA glycosylase (202 aa).

The protein belongs to the DNA glycosylase MPG family.

The protein is Putative 3-methyladenine DNA glycosylase of Rhodopseudomonas palustris (strain BisB5).